Consider the following 574-residue polypeptide: uncharacterized protein (574 aa).

The segment at S297–S317 is disordered.

This is an uncharacterized protein from Mus musculus (Mouse).